Consider the following 81-residue polypeptide: Consomatin Le1 (81 aa).

The signal sequence occupies residues 1–22 (MQTAYWVMVMMMVWITAPLSEG). A propeptide spanning residues 23-57 (GKPNDVIRGLVPDDLTPQLILRSLISRRRSDKDVR) is cleaved from the precursor. E58 carries the 4-carboxyglutamate modification. Cysteines 62 and 67 form a disulfide. Residue W64 is modified to D-tryptophan. 4-hydroxyproline is present on P69. A propeptide spanning residues 71–81 (LWRRHDLKGKD) is cleaved from the precursor.

This sequence belongs to the conotoxin C superfamily. Consomatin family. In terms of tissue distribution, expressed by the venom duct.

The protein resides in the secreted. Its function is as follows. Moderately activates human somatostatin receptors (SSTR) with a preferential activation of SSTR1 and SSTR4. In vivo, does not cause behavioral changes in mice within a few minutes of intracranial injection, but causes a progressive loss of movement thereafter. Four to five hours after injection, mice recover, even with the highest dose tested. Shows antinociception and antihyperalgesia activities in two mouse models of acute pain, most probably by acting outside the central nervous system. The protein is Consomatin Le1 of Conus lenavati (Cone snail).